A 405-amino-acid polypeptide reads, in one-letter code: Cysteine desulfurase IscS (405 aa).

Residues 75-76 (AT), Asn156, Gln184, and 204-206 (SAH) each bind pyridoxal 5'-phosphate. Residue Lys207 is modified to N6-(pyridoxal phosphate)lysine. Thr244 contributes to the pyridoxal 5'-phosphate binding site. Cys329 (cysteine persulfide intermediate) is an active-site residue. Residue Cys329 participates in [2Fe-2S] cluster binding.

It belongs to the class-V pyridoxal-phosphate-dependent aminotransferase family. NifS/IscS subfamily. In terms of assembly, homodimer. Forms a heterotetramer with IscU, interacts with other sulfur acceptors. Pyridoxal 5'-phosphate is required as a cofactor.

It is found in the cytoplasm. It carries out the reaction (sulfur carrier)-H + L-cysteine = (sulfur carrier)-SH + L-alanine. It functions in the pathway cofactor biosynthesis; iron-sulfur cluster biosynthesis. In terms of biological role, master enzyme that delivers sulfur to a number of partners involved in Fe-S cluster assembly, tRNA modification or cofactor biosynthesis. Catalyzes the removal of elemental sulfur atoms from cysteine to produce alanine. Functions as a sulfur delivery protein for Fe-S cluster synthesis onto IscU, an Fe-S scaffold assembly protein, as well as other S acceptor proteins. This Acinetobacter baumannii (strain SDF) protein is Cysteine desulfurase IscS.